The chain runs to 475 residues: Exodeoxyribonuclease 7 large subunit (475 aa).

Positions 452–475 are disordered; that stretch reads DHGLNRSSKSKRIKSKQDDQGTLF. The span at 466 to 475 shows a compositional bias: basic and acidic residues; sequence SKQDDQGTLF.

This sequence belongs to the XseA family. Heterooligomer composed of large and small subunits.

The protein resides in the cytoplasm. It catalyses the reaction Exonucleolytic cleavage in either 5'- to 3'- or 3'- to 5'-direction to yield nucleoside 5'-phosphates.. Bidirectionally degrades single-stranded DNA into large acid-insoluble oligonucleotides, which are then degraded further into small acid-soluble oligonucleotides. This is Exodeoxyribonuclease 7 large subunit from Bartonella quintana (strain Toulouse) (Rochalimaea quintana).